Reading from the N-terminus, the 306-residue chain is Glutaminase (306 aa).

The substrate site is built by Ser64, Asn115, Glu159, Asn166, Tyr190, Tyr242, and Val260.

Belongs to the glutaminase family. Homotetramer.

The catalysed reaction is L-glutamine + H2O = L-glutamate + NH4(+). The polypeptide is Glutaminase (Aliivibrio salmonicida (strain LFI1238) (Vibrio salmonicida (strain LFI1238))).